The following is a 135-amino-acid chain: uncharacterized protein (135 aa).

Residues 8 to 123 (PKGKMVLRTL…IFVYVAVDEF (116 aa)) form the HotDog ACOT-type domain.

Belongs to the acyl coenzyme A hydrolase family.

This is an uncharacterized protein from Buchnera aphidicola subsp. Baizongia pistaciae (strain Bp).